A 139-amino-acid chain; its full sequence is Peptide methionine sulfoxide reductase B4 (139 aa).

At Ala-2 the chain carries N-acetylalanine. Positions 12-133 (EEEWRAVLSP…NSVSINFNPA (122 aa)) constitute a MsrB domain. Residues Cys-51, Cys-54, Cys-97, and Cys-100 each coordinate Zn(2+). Cys-69 and Cys-122 are oxidised to a cystine. Catalysis depends on Cys-122, which acts as the Nucleophile.

It belongs to the MsrB Met sulfoxide reductase family. Zn(2+) serves as cofactor.

Its subcellular location is the cytoplasm. The protein resides in the cytosol. It catalyses the reaction L-methionyl-[protein] + [thioredoxin]-disulfide + H2O = L-methionyl-(R)-S-oxide-[protein] + [thioredoxin]-dithiol. In terms of biological role, catalyzes the reduction of methionine sulfoxide (MetSO) to methionine in proteins. Plays a protective role against oxidative stress by restoring activity to proteins that have been inactivated by methionine oxidation. MSRB family specifically reduces the MetSO R-enantiomer. This chain is Peptide methionine sulfoxide reductase B4 (MSRB4), found in Arabidopsis thaliana (Mouse-ear cress).